Consider the following 128-residue polypeptide: Large ribosomal subunit protein bL12 (128 aa).

Belongs to the bacterial ribosomal protein bL12 family. As to quaternary structure, homodimer. Part of the ribosomal stalk of the 50S ribosomal subunit. Forms a multimeric L10(L12)X complex, where L10 forms an elongated spine to which 2 to 4 L12 dimers bind in a sequential fashion. Binds GTP-bound translation factors.

Functionally, forms part of the ribosomal stalk which helps the ribosome interact with GTP-bound translation factors. Is thus essential for accurate translation. This chain is Large ribosomal subunit protein bL12, found in Corynebacterium kroppenstedtii (strain DSM 44385 / JCM 11950 / CIP 105744 / CCUG 35717).